The following is a 194-amino-acid chain: Leucyl/phenylalanyl-tRNA--protein transferase (194 aa).

This sequence belongs to the L/F-transferase family.

It is found in the cytoplasm. The enzyme catalyses N-terminal L-lysyl-[protein] + L-leucyl-tRNA(Leu) = N-terminal L-leucyl-L-lysyl-[protein] + tRNA(Leu) + H(+). It catalyses the reaction N-terminal L-arginyl-[protein] + L-leucyl-tRNA(Leu) = N-terminal L-leucyl-L-arginyl-[protein] + tRNA(Leu) + H(+). The catalysed reaction is L-phenylalanyl-tRNA(Phe) + an N-terminal L-alpha-aminoacyl-[protein] = an N-terminal L-phenylalanyl-L-alpha-aminoacyl-[protein] + tRNA(Phe). Functionally, functions in the N-end rule pathway of protein degradation where it conjugates Leu, Phe and, less efficiently, Met from aminoacyl-tRNAs to the N-termini of proteins containing an N-terminal arginine or lysine. In Chlorobaculum tepidum (strain ATCC 49652 / DSM 12025 / NBRC 103806 / TLS) (Chlorobium tepidum), this protein is Leucyl/phenylalanyl-tRNA--protein transferase.